The sequence spans 446 residues: Phosphoglucosamine mutase (446 aa).

S102 serves as the catalytic Phosphoserine intermediate. Residues S102, D241, D243, and D245 each coordinate Mg(2+). Position 102 is a phosphoserine (S102).

Belongs to the phosphohexose mutase family. Mg(2+) serves as cofactor. Post-translationally, activated by phosphorylation.

The catalysed reaction is alpha-D-glucosamine 1-phosphate = D-glucosamine 6-phosphate. Its function is as follows. Catalyzes the conversion of glucosamine-6-phosphate to glucosamine-1-phosphate. The chain is Phosphoglucosamine mutase from Xylella fastidiosa (strain M23).